The chain runs to 115 residues: Con-Ins G1c (115 aa).

A signal peptide spans 1 to 24; sequence MTTSFYFLLMALGLLLYVCQSSFG. A propeptide spanning residues 25–29 is cleaved from the precursor; it reads NQHTR. Pro-34 is modified (4-hydroxyproline; partial). Disulfide bonds link Cys-38–Cys-101, Cys-50–Cys-114, and Cys-100–Cys-105. A 4-carboxyglutamate modification is found at Glu-41. Residues 53–94 constitute a propeptide, c peptide; the sequence is KRNDAGKKRGRASPLWQRRGSLSQLKARAKRNGAFHLPRDGR. A 4-carboxyglutamate modification is found at Glu-98. Pro-104 is subject to 4-hydroxyproline; partial. Position 109 is a 4-carboxyglutamate; partial (Glu-109).

Belongs to the insulin family. In terms of assembly, heterodimer of A and B chains; disulfide-linked. Post-translationally, is different from Con-Ins G1a (AC A0A0B5AC95) due to absence of amidation at Cys-114. Expressed by the venom gland.

Its subcellular location is the secreted. In terms of biological role, this venom insulin, from a fish-hunting cone snail, facilitates prey capture by rapidly inducing hypoglycemic shock. It is one of the smallest known insulin found in nature and lacks the C-terminal segment of the B chain that, in human insulin, mediates engagement of the insulin receptor (INSR) and assembly of the hormone's hexameric storage form. Despite lacking this segment, it both binds and activates human insulin receptor (long isoform (HIR-B)) with only a 10-fold lower potency. In vivo, intraperitoneal injection of this peptide into zebrafish lowers blood glucose with the same potency than human insulin. In addition, when applied to water, this peptide reduces overall locomotor activity of zebrafish larvae, observed as a significant decrease in the percentage of time spent swimming and movement frequency. The protein is Con-Ins G1c of Conus geographus (Geography cone).